A 244-amino-acid chain; its full sequence is 1-(5-phosphoribosyl)-5-[(5-phosphoribosylamino)methylideneamino] imidazole-4-carboxamide isomerase (244 aa).

Residue D15 is the Proton acceptor of the active site. D136 acts as the Proton donor in catalysis.

The protein belongs to the HisA/HisF family.

It localises to the cytoplasm. The enzyme catalyses 1-(5-phospho-beta-D-ribosyl)-5-[(5-phospho-beta-D-ribosylamino)methylideneamino]imidazole-4-carboxamide = 5-[(5-phospho-1-deoxy-D-ribulos-1-ylimino)methylamino]-1-(5-phospho-beta-D-ribosyl)imidazole-4-carboxamide. It functions in the pathway amino-acid biosynthesis; L-histidine biosynthesis; L-histidine from 5-phospho-alpha-D-ribose 1-diphosphate: step 4/9. The polypeptide is 1-(5-phosphoribosyl)-5-[(5-phosphoribosylamino)methylideneamino] imidazole-4-carboxamide isomerase (Dehalococcoides mccartyi (strain CBDB1)).